The sequence spans 163 residues: SsrA-binding protein (163 aa).

Basic and acidic residues predominate over residues 138–157; sequence EDRRGAIAERESKREMDRAL. The segment at 138–163 is disordered; sequence EDRRGAIAERESKREMDRALARGRRR.

This sequence belongs to the SmpB family.

The protein resides in the cytoplasm. Functionally, required for rescue of stalled ribosomes mediated by trans-translation. Binds to transfer-messenger RNA (tmRNA), required for stable association of tmRNA with ribosomes. tmRNA and SmpB together mimic tRNA shape, replacing the anticodon stem-loop with SmpB. tmRNA is encoded by the ssrA gene; the 2 termini fold to resemble tRNA(Ala) and it encodes a 'tag peptide', a short internal open reading frame. During trans-translation Ala-aminoacylated tmRNA acts like a tRNA, entering the A-site of stalled ribosomes, displacing the stalled mRNA. The ribosome then switches to translate the ORF on the tmRNA; the nascent peptide is terminated with the 'tag peptide' encoded by the tmRNA and targeted for degradation. The ribosome is freed to recommence translation, which seems to be the essential function of trans-translation. The sequence is that of SsrA-binding protein from Anaeromyxobacter dehalogenans (strain 2CP-1 / ATCC BAA-258).